The chain runs to 345 residues: Biotin synthase (345 aa).

Positions 38-256 (GEVQVSTLLS…IAVARIMMPR (219 aa)) constitute a Radical SAM core domain. [4Fe-4S] cluster-binding residues include C53, C57, and C60. The [2Fe-2S] cluster site is built by C97, C128, C188, and R260.

The protein belongs to the radical SAM superfamily. Biotin synthase family. In terms of assembly, homodimer. [4Fe-4S] cluster serves as cofactor. It depends on [2Fe-2S] cluster as a cofactor.

It catalyses the reaction (4R,5S)-dethiobiotin + (sulfur carrier)-SH + 2 reduced [2Fe-2S]-[ferredoxin] + 2 S-adenosyl-L-methionine = (sulfur carrier)-H + biotin + 2 5'-deoxyadenosine + 2 L-methionine + 2 oxidized [2Fe-2S]-[ferredoxin]. It functions in the pathway cofactor biosynthesis; biotin biosynthesis; biotin from 7,8-diaminononanoate: step 2/2. Functionally, catalyzes the conversion of dethiobiotin (DTB) to biotin by the insertion of a sulfur atom into dethiobiotin via a radical-based mechanism. The chain is Biotin synthase from Sodalis glossinidius (strain morsitans).